The sequence spans 676 residues: DNA ligase (676 aa).

NAD(+) is bound by residues 41–45 (DLTYD), 90–91 (SL), and glutamate 123. Lysine 125 functions as the N6-AMP-lysine intermediate in the catalytic mechanism. 4 residues coordinate NAD(+): arginine 146, glutamate 180, lysine 293, and lysine 317. Residues cysteine 408, cysteine 411, cysteine 424, and cysteine 429 each contribute to the Zn(2+) site.

The protein belongs to the NAD-dependent DNA ligase family. LigA subfamily. Requires Mg(2+) as cofactor. Mn(2+) is required as a cofactor.

It catalyses the reaction NAD(+) + (deoxyribonucleotide)n-3'-hydroxyl + 5'-phospho-(deoxyribonucleotide)m = (deoxyribonucleotide)n+m + AMP + beta-nicotinamide D-nucleotide.. Functionally, DNA ligase that catalyzes the formation of phosphodiester linkages between 5'-phosphoryl and 3'-hydroxyl groups in double-stranded DNA using NAD as a coenzyme and as the energy source for the reaction. It is essential for DNA replication and repair of damaged DNA. This Borrelia turicatae (strain 91E135) protein is DNA ligase.